A 474-amino-acid chain; its full sequence is tRNA-2-methylthio-N(6)-dimethylallyladenosine synthase (474 aa).

The MTTase N-terminal domain maps to 3-120; that stretch reads KKLHIKTWGC…LPEMIEQVRR (118 aa). The [4Fe-4S] cluster site is built by C12, C49, C83, C157, C161, and C164. The 233-residue stretch at 143-375 folds into the Radical SAM core domain; the sequence is RAEGPTAFVS…QDRITQQAMR (233 aa). Positions 378–441 constitute a TRAM domain; the sequence is RHMMGTVQRI…TNSLRGKFIR (64 aa).

The protein belongs to the methylthiotransferase family. MiaB subfamily. As to quaternary structure, monomer. It depends on [4Fe-4S] cluster as a cofactor.

It is found in the cytoplasm. It carries out the reaction N(6)-dimethylallyladenosine(37) in tRNA + (sulfur carrier)-SH + AH2 + 2 S-adenosyl-L-methionine = 2-methylsulfanyl-N(6)-dimethylallyladenosine(37) in tRNA + (sulfur carrier)-H + 5'-deoxyadenosine + L-methionine + A + S-adenosyl-L-homocysteine + 2 H(+). In terms of biological role, catalyzes the methylthiolation of N6-(dimethylallyl)adenosine (i(6)A), leading to the formation of 2-methylthio-N6-(dimethylallyl)adenosine (ms(2)i(6)A) at position 37 in tRNAs that read codons beginning with uridine. The polypeptide is tRNA-2-methylthio-N(6)-dimethylallyladenosine synthase (Shewanella oneidensis (strain ATCC 700550 / JCM 31522 / CIP 106686 / LMG 19005 / NCIMB 14063 / MR-1)).